A 325-amino-acid polypeptide reads, in one-letter code: Biotin synthase (325 aa).

Residues 52-281 (YQKDDVVLCS…AKPLLICGGR (230 aa)) form the Radical SAM core domain. 3 residues coordinate [4Fe-4S] cluster: Cys-70, Cys-74, and Cys-77. The [2Fe-2S] cluster site is built by Ser-114, Cys-146, and Cys-206.

This sequence belongs to the radical SAM superfamily. Biotin synthase family. As to quaternary structure, homodimer. It depends on [4Fe-4S] cluster as a cofactor. The cofactor is [2Fe-2S] cluster.

The enzyme catalyses (4R,5S)-dethiobiotin + (sulfur carrier)-SH + 2 reduced [2Fe-2S]-[ferredoxin] + 2 S-adenosyl-L-methionine = (sulfur carrier)-H + biotin + 2 5'-deoxyadenosine + 2 L-methionine + 2 oxidized [2Fe-2S]-[ferredoxin]. The protein operates within cofactor biosynthesis; biotin biosynthesis; biotin from 7,8-diaminononanoate: step 2/2. Its function is as follows. Catalyzes the conversion of dethiobiotin (DTB) to biotin by the insertion of a sulfur atom into dethiobiotin via a radical-based mechanism. The polypeptide is Biotin synthase (Syntrophus aciditrophicus (strain SB)).